The following is a 993-amino-acid chain: Replication protein 1a (993 aa).

The interval 50–409 (RNVLSVKDSE…TIVINGMSMQ (360 aa)) is methyltransferase. The Alphavirus-like MT domain occupies 72 to 290 (HLTQQEFAPH…HDWENIKSFL (219 aa)). Residues 537–565 (LAQPVDEVSDSPEVPSSTPDDTADVCGKE) form a disordered region. Residues 687–838 (CVICNSESLS…KIIPDETSDA (152 aa)) form the (+)RNA virus helicase ATP-binding domain. Residues 712–975 (VDGVAGCGKT…LTRHKVTFRY (264 aa)) are ATP-dependent helicase. 714–721 (GVAGCGKT) serves as a coordination point for ATP. The (+)RNA virus helicase C-terminal domain occupies 839 to 993 (DTTFRSPQDV…DLIAECIARA (155 aa)).

The protein belongs to the bromoviridae replication protein 1a family. In terms of assembly, interacts with RNA-directed RNA polymerase 2a.

The protein resides in the host endoplasmic reticulum membrane. In terms of biological role, involved in the virus replication. Contains a helicase domain and a methyltransferase domain. The methyltransferase domain is probably involved in viral RNA capping. Involved in the formation of ER membrane spherular invaginations in which RNA replication complexes form. This is Replication protein 1a from Cucumber mosaic virus (strain O) (CMV).